Consider the following 500-residue polypeptide: Aldehyde dehydrogenase, mitochondrial (500 aa).

Residues Lys-35, Lys-56, Lys-61, and Lys-142 each carry the N6-acetyllysine modification. Position 245 to 250 (245 to 250 (GSTEVG)) interacts with NAD(+). Glu-268 functions as the Proton acceptor in the catalytic mechanism. Catalysis depends on Cys-302, which acts as the Nucleophile. 8 positions are modified to N6-acetyllysine: Lys-351, Lys-358, Lys-366, Lys-390, Lys-409, Lys-411, Lys-424, and Lys-434.

This sequence belongs to the aldehyde dehydrogenase family. In terms of assembly, homotetramer. Post-translationally, in response to mitochondrial stress, the precursor protein is ubiquitinated by the SIFI complex in the cytoplasm before mitochondrial import, leading to its degradation. Within the SIFI complex, UBR4 initiates ubiquitin chain that are further elongated or branched by KCMF1.

The protein resides in the mitochondrion matrix. The enzyme catalyses an aldehyde + NAD(+) + H2O = a carboxylate + NADH + 2 H(+). It functions in the pathway alcohol metabolism; ethanol degradation; acetate from ethanol: step 2/2. Functionally, required for clearance of cellular formaldehyde, a cytotoxic and carcinogenic metabolite that induces DNA damage. This Mesocricetus auratus (Golden hamster) protein is Aldehyde dehydrogenase, mitochondrial (ALDH2).